The chain runs to 215 residues: Phosphatidylserine decarboxylase proenzyme (215 aa).

Serine 185 functions as the Schiff-base intermediate with substrate; via pyruvic acid in the catalytic mechanism. At serine 185 the chain carries Pyruvic acid (Ser); by autocatalysis.

The protein belongs to the phosphatidylserine decarboxylase family. PSD-A subfamily. As to quaternary structure, heterodimer of a large membrane-associated beta subunit and a small pyruvoyl-containing alpha subunit. The cofactor is pyruvate. In terms of processing, is synthesized initially as an inactive proenzyme. Formation of the active enzyme involves a self-maturation process in which the active site pyruvoyl group is generated from an internal serine residue via an autocatalytic post-translational modification. Two non-identical subunits are generated from the proenzyme in this reaction, and the pyruvate is formed at the N-terminus of the alpha chain, which is derived from the carboxyl end of the proenzyme. The post-translation cleavage follows an unusual pathway, termed non-hydrolytic serinolysis, in which the side chain hydroxyl group of the serine supplies its oxygen atom to form the C-terminus of the beta chain, while the remainder of the serine residue undergoes an oxidative deamination to produce ammonia and the pyruvoyl prosthetic group on the alpha chain.

It is found in the cell membrane. It catalyses the reaction a 1,2-diacyl-sn-glycero-3-phospho-L-serine + H(+) = a 1,2-diacyl-sn-glycero-3-phosphoethanolamine + CO2. The protein operates within phospholipid metabolism; phosphatidylethanolamine biosynthesis; phosphatidylethanolamine from CDP-diacylglycerol: step 2/2. Its function is as follows. Catalyzes the formation of phosphatidylethanolamine (PtdEtn) from phosphatidylserine (PtdSer). The sequence is that of Phosphatidylserine decarboxylase proenzyme from Streptomyces avermitilis (strain ATCC 31267 / DSM 46492 / JCM 5070 / NBRC 14893 / NCIMB 12804 / NRRL 8165 / MA-4680).